A 651-amino-acid polypeptide reads, in one-letter code: MAAGVATWLPFARAAAVGWLPLAQQPLPPAPEVKASRGDEVLVVNVSGRRFETWKNTLDRYPDTLLGSSEKEFFYDAESGEYFFDRDPDMFRHVLNFYRTGRLHCPRQECIQAFDEELAFYGLVPELVGDCCLEEYRDRKKENAERLAEDEEAEQAGEGPALPAGSSLRQRLWRAFENPHTSTAALVFYYVTGFFIAVSVIANVVETIPCRGTPRWPSKEQSCGDRFPTAFFCMDTACVLIFTGEYLLRLFAAPSRCRFLRSVMSLIDVVAILPYYIGLFVPKNDDVSGAFVTLRVFRVFRIFKFSRHSQGLRILGYTLKSCASELGFLLFSLTMAIIIFATVMFYAEKGTSKTNFTSIPAAFWYTIVTMTTLGYGDMVPSTIAGKIFGSICSLSGVLVIALPVPVIVSNFSRIYHQNQRADKRRAQQKVRLARIRLAKSGTTNAFLQYKQNGGLEDSGSGDGQMLCVRSRSAFEQQHHHLLHCLEKTTCHEFTDELTFSEALGAVSLGGRTSRSTSVSSQPMGPGSLFSSCCSRRVNRRAIRLANSTASVSRGSMQELDTLAGLRRSPAPQTRSSLNAKPHDSLDLNCDSRDFVAAIISIPTPPANTPDESQPSSPSGGGGSGGTPNTTLRNSSLGTPCLLPETVKISSL.

The Cytoplasmic segment spans residues 1-183 (MAAGVATWLP…RAFENPHTST (183 aa)). An interaction with KCNIP1, KCNIP2, and other family members region spans residues 2 to 20 (AAGVATWLPFARAAAVGWL). Zn(2+) contacts are provided by H104, C131, and C132. A disordered region spans residues 144-164 (AERLAEDEEAEQAGEGPALPA). Residues 184 to 205 (AALVFYYVTGFFIAVSVIANVV) form a helical membrane-spanning segment. Residues 206 to 230 (ETIPCRGTPRWPSKEQSCGDRFPTA) lie on the Extracellular side of the membrane. Residues 231–252 (FFCMDTACVLIFTGEYLLRLFA) traverse the membrane as a helical segment. Topologically, residues 253-263 (APSRCRFLRSV) are cytoplasmic. Residues 264–284 (MSLIDVVAILPYYIGLFVPKN) traverse the membrane as a helical segment. Topologically, residues 285–287 (DDV) are extracellular. A helical; Voltage-sensor transmembrane segment spans residues 288-308 (SGAFVTLRVFRVFRIFKFSRH). Residues 309-323 (SQGLRILGYTLKSCA) lie on the Cytoplasmic side of the membrane. The interval 310–323 (QGLRILGYTLKSCA) is S4-S5 linker. A helical transmembrane segment spans residues 324-345 (SELGFLLFSLTMAIIIFATVMF). The Extracellular segment spans residues 346–359 (YAEKGTSKTNFTSI). N355 carries an N-linked (GlcNAc...) asparagine glycan. An intramembrane region (helical) is located at residues 360-371 (PAAFWYTIVTMT). Residues 372 to 377 (TLGYGD) carry the Selectivity filter motif. An intramembrane segment occupies 372-379 (TLGYGDMV). Residues 380–386 (PSTIAGK) lie on the Extracellular side of the membrane. A helical transmembrane segment spans residues 387–415 (IFGSICSLSGVLVIALPVPVIVSNFSRIY). The Cytoplasmic segment spans residues 416–651 (HQNQRADKRR…LPETVKISSL (236 aa)). Phosphoserine is present on S458. Residues 474 to 489 (FEQQHHHLLHCLEKTT) form a required for dendritic targeting region. S555 is modified (phosphoserine). Disordered regions lie at residues 566–585 (RRSPAPQTRSSLNAKPHDSL) and 601–651 (IPTP…ISSL). A compositionally biased stretch (polar residues) spans 626 to 637 (TPNTTLRNSSLG).

This sequence belongs to the potassium channel family. D (Shal) (TC 1.A.1.2) subfamily. Kv4.1/KCND1 sub-subfamily. Component of heteromultimeric potassium channels. Identified in potassium channel complexes containing KCND1, KCND2, KCND3, KCNIP1, KCNIP2, KCNIP3, KCNIP4, DPP6 and DPP10.

It is found in the cell membrane. It carries out the reaction K(+)(in) = K(+)(out). In terms of biological role, A-type voltage-gated potassium channel that mediates transmembrane potassium transport in excitable membranes in the brain. Mediates A-type current I(SA) in suprachiasmatic nucleus (SCN) neurons. Exhibits a low-threshold A-type current with a hyperpolarized steady-state inactivation midpoint and the recovery process was steeply voltage-dependent, with recovery being markedly faster at more negative potentials. May regulates repetitive firing rates in the suprachiasmatic nucleus (SCN) neurons and circadian rhythms in neuronal excitability and behavior. Contributes to the regulation of the circadian rhythm of action potential firing in suprachiasmatic nucleus neurons, which regulates the circadian rhythm of locomotor activity. The regulatory subunit KCNIP1 modulates the kinetics of channel inactivation, increases the current amplitudes and accelerates recovery from inactivation, shifts activation in a depolarizing direction. The regulatory subunit DPP10 decreases the voltage sensitivity of the inactivation channel gating. This Mus musculus (Mouse) protein is A-type voltage-gated potassium channel KCND1.